The sequence spans 427 residues: Glutamate-1-semialdehyde 2,1-aminomutase (427 aa).

Lys-268 carries the N6-(pyridoxal phosphate)lysine modification.

The protein belongs to the class-III pyridoxal-phosphate-dependent aminotransferase family. HemL subfamily. The cofactor is pyridoxal 5'-phosphate.

The protein resides in the cytoplasm. The enzyme catalyses (S)-4-amino-5-oxopentanoate = 5-aminolevulinate. It participates in porphyrin-containing compound metabolism; protoporphyrin-IX biosynthesis; 5-aminolevulinate from L-glutamyl-tRNA(Glu): step 2/2. This Methanococcus vannielii (strain ATCC 35089 / DSM 1224 / JCM 13029 / OCM 148 / SB) protein is Glutamate-1-semialdehyde 2,1-aminomutase.